Consider the following 1997-residue polypeptide: Protein MOR1 (1997 aa).

HEAT repeat units lie at residues 48–86 (DARL…AADA) and 164–202 (VVPP…WIGK). Positions 236–264 (RKIRSEQEKELEEEVVPEAAGTNNSEEAV) are disordered. HEAT repeat units lie at residues 321 to 359 (PGDF…GLRT), 362 to 400 (SGNS…SGCI), and 441 to 479 (LKLH…MVGM). The interval 501-576 (IGSASDTTSG…DGGPQSKASA (76 aa)) is disordered. Positions 504–520 (ASDTTSGTVAASNTGVG) are enriched in polar residues. Positions 529–539 (SSSMRRSAASM) are enriched in low complexity. HEAT repeat units lie at residues 848 to 886 (EDIS…EAHK), 890 to 928 (PTGT…AMGP), 931 to 969 (EKSS…AAQL), and 1007 to 1045 (PSEA…ICGQ). The segment at 1087–1115 (MSLPSKAGSKNNKHGPNDRGSNVSKAVSQ) is disordered. HEAT repeat units lie at residues 1233-1259 (TTCL…MLTE), 1260-1294 (AEAA…MVNI), 1295-1332 (YSLP…HHGT), and 1334-1372 (VSGL…NLGD). Residues 1400–1410 (MDKRREGRPGD) are compositionally biased toward basic and acidic residues. The interval 1400-1436 (MDKRREGRPGDARAALRRSVRENGSDIAEQSGEAVSR) is disordered. One copy of the HEAT 14 repeat lies at 1539 to 1579 (RSCKYVLNTLMQTFQIKRLAHAVKEGTLDNLITELLLWLLD). The disordered stretch occupies residues 1755 to 1776 (MGQTHWGDAGSNNPNPSTHSTD). Polar residues predominate over residues 1764 to 1776 (GSNNPNPSTHSTD).

It belongs to the TOG/XMAP215 family.

The protein localises to the cytoplasm. Its subcellular location is the cytoskeleton. Microtubule-associated protein that is essential for cortical microtubules organization and function. The sequence is that of Protein MOR1 (MOR1) from Oryza sativa subsp. japonica (Rice).